The following is a 91-amino-acid chain: Pyruvate kinase (91 aa).

Arginine 48 contacts substrate. K(+)-binding residues include asparagine 50, serine 52, aspartate 82, and threonine 83. 50-53 is a binding site for ATP; that stretch reads NFSH. Arginine 89 provides a ligand contact to ATP.

It belongs to the pyruvate kinase family. Homotetramer. Mg(2+) is required as a cofactor. The cofactor is K(+).

The enzyme catalyses pyruvate + ATP = phosphoenolpyruvate + ADP + H(+). It participates in carbohydrate degradation; glycolysis; pyruvate from D-glyceraldehyde 3-phosphate: step 5/5. This Leishmania braziliensis protein is Pyruvate kinase.